An 836-amino-acid polypeptide reads, in one-letter code: Glutamate receptor ionotropic, kainate glr-3 (836 aa).

The signal sequence occupies residues 1–19 (MFWIAKTLIAFLILLKTDC). The Extracellular segment spans residues 20–523 (YKIAIPANLI…WFKFMDPLST (504 aa)). A disulfide bond links cysteine 76 and cysteine 320. N-linked (GlcNAc...) asparagine glycosylation is found at asparagine 225, asparagine 257, asparagine 356, asparagine 391, and asparagine 419. Residues 478–480 (SLT) and arginine 485 each bind L-glutamate. Residues 524–544 (QVWIMTFASYFVVSVAIWIIA) form a helical membrane-spanning segment. At 545-600 (KISPYEQFERDEDNGQYKPVDNQFSLRNSFWFTVCSLMQQGSELCPRAASTRLLTG) the chain is on the cytoplasmic side. A helical transmembrane segment spans residues 601 to 621 (IWWFFALILISSYTANLAAVL). The Extracellular segment spans residues 622–780 (TTRRMETPIE…KRKDQDDGES (159 aa)). Residue 651-652 (ST) coordinates L-glutamate. The N-linked (GlcNAc...) asparagine glycan is linked to asparagine 657. Position 699 (glutamate 699) interacts with L-glutamate. The chain crosses the membrane as a helical span at residues 781–801 (IGGIFIILVVGLVLTAVLVIF). Residues 802–836 (ELITTRKPSPAQSQVIRHVNVIPSFKLGFFRWNVN) are Cytoplasmic-facing.

The protein belongs to the glutamate-gated ion channel (TC 1.A.10.1) family. In terms of tissue distribution, expressed in the intestine and in the ASER neuron. Also expressed in the thermosensitive RIA interneuron.

It localises to the cell membrane. The protein localises to the postsynaptic cell membrane. With respect to regulation, activated by low temperature of 18 degrees Celsius in ASER neuron. In terms of biological role, ionotropic glutamate receptor. Activation by glutamate requires additional verification. L-glutamate acts as an excitatory neurotransmitter at many synapses in the central nervous system. Binding of the excitatory neurotransmitter L-glutamate induces a conformation change, leading to the opening of the cation channel, and thereby converts the chemical signal to an electrical impulse. The receptor then desensitizes rapidly and enters a transient inactive state, characterized by the presence of bound agonist. Its function is as follows. Independent of its ionotropic glutamate receptor activity, acts as a thermoreceptor in the ASER neuron where it triggers a calcium response to activate cold avoidance behavior in response to temperatures below 19 degrees Celsius. Possibly functions as a metabotropic cold receptor and acts upstream of the G(o) G protein goa-1 in the ASER neuron. Also functions in cold sensing in the intestine. The polypeptide is Glutamate receptor ionotropic, kainate glr-3 (Caenorhabditis elegans).